We begin with the raw amino-acid sequence, 768 residues long: MTIDTTNESDNSPTNSPGLEASARTFSLNASKMVRITDDYADEVFIEQNDVVIEKPRMDPLHVRKLMETWRKAARRARTNYIDPWDEFNIHEYPVQRAKRYRYSAIRKQWTEDIVDVRLHPDSFARGAMRECYRLKKCSKHGTSQDWSSNYVAKRYICQVDRRVLFDDVRLQMDAKLWAEEYNRYNPPKKIDIVQMCVIEMIDVKGSPLYHLEHFIEGKYIKYNSNSGFVSNAARLTPQAFSHFTFERSGHQMMVVDIQGVGDLYTDPQIHTVVGTDYGDGNLGTRGMALFFHSHRCNDICETMDLSNFELSPPEIEATEVAMEVAAKQKKSCIVPPTVFEARRNRISSECVHVEHGISMDQLRKRKTLNQSSTDLSAKSHNEDCVCPECIPVVEQLCEPCSEDEEDEEEDYPRSEKSGNSQKSRRSRMSISTRSSGDESASRPRKCGFVDLNSLRQRHDSFRSSVGTYSMNSSRQTRDTEKDEFWKVLRKQSVPANILSLQLQQMAANLENDEDVPQVTGHQFSVLGQIHIDLSRYHELGRFVEVDSEHKEMLEGSENDARVPIKYDKQSAIFHLDIARKCGILEAVLTSAHIVLGLPHELLKEVTVDDLFPNGFGEQENGIRADKGQKPCDLEEFGSDLMEIAAEMGDKGAMLYMAHAYETGQHLGPNRRTDYKKSIDWYQRVVGFQEEEELDSDCGKTTFSSFAPLTRHEILAKMAEMYKEGGYGLNQDFERAYGLFNEAAEAAMEAMNGKLANKYYEKAEMCGE.

Residues 1-17 (MTIDTTNESDNSPTNSP) show a composition bias toward polar residues. The segment at 1 to 21 (MTIDTTNESDNSPTNSPGLEA) is disordered. The Alpha-type protein kinase domain occupies 102–309 (RYSAIRKQWT…ICETMDLSNF (208 aa)). ATP is bound at residue 279-284 (GDGNLG). Residues 402–411 (SEDEEDEEED) show a composition bias toward acidic residues. The interval 402–446 (SEDEEDEEEDYPRSEKSGNSQKSRRSRMSISTRSSGDESASRPRK) is disordered.

It belongs to the protein kinase superfamily. Alpha-type protein kinase family. Monomer or homodimer. Interacts with cmd-1 in the presence of Ca(2+).

It carries out the reaction [translation elongation factor 2] + ATP = [translation elongation factor 2]-phosphate + ADP + H(+). Calcium(2+)/calmodulin dependent activity. Undergoes calcium/calmodulin-dependent intramolecular autophosphorylation, and this results in it becoming partially calcium/calmodulin-independent. In terms of biological role, phosphorylates elongation factor-2 (eEF-2) at two threonine residues that are conserved in all eukaryotes and are located within a GTP-binding domain. Calcium(2+)/calmodulin dependent activity. Inactivates eEF-2 by catalyzing its phosphorylation. eEF-2 catalyzes the movement of the ribosome along mRNA during translation in eukaryotic cells. This is Eukaryotic elongation factor 2 kinase (efk-1) from Caenorhabditis elegans.